The following is a 395-amino-acid chain: Probable alcohol dehydrogenase EutG (395 aa).

NAD(+)-binding positions include D57, G116 to D120, T156 to T160, K178, and L197 to V201. Residues D212, H216, H281, and H295 each contribute to the Fe cation site. NAD(+) is bound by residues H295 and D354.

The protein belongs to the iron-containing alcohol dehydrogenase family. It depends on Fe cation as a cofactor.

The protein localises to the bacterial microcompartment. The catalysed reaction is ethanol + NAD(+) = acetaldehyde + NADH + H(+). The protein operates within amine and polyamine degradation; ethanolamine degradation. In terms of biological role, may act on the acetaldehyde produced from the degradation of ethanolamine, producing ethanol. Active on acetaldehyde and isobutyraldehyde in vitro. In vitro works equally well with NADH or NADPH. The polypeptide is Probable alcohol dehydrogenase EutG (eutG) (Escherichia coli (strain K12)).